Reading from the N-terminus, the 531-residue chain is Aspartate--tRNA ligase, cytoplasmic (531 aa).

The tract at residues 1–45 (MADAAEGEQPKLSKKELNKLARKAKKDEKAGEKGGNQQQAAAMDQ) is disordered. The span at 8–32 (EQPKLSKKELNKLARKAKKDEKAGE) shows a compositional bias: basic and acidic residues. An L-aspartate-binding site is contributed by Glu-259. An aspartate region spans residues 281–284 (QLYK). Arg-303 contacts L-aspartate. Residues 303–305 (RAE), 311–313 (RHM), and Glu-454 contribute to the ATP site. Residues Ser-457 and Arg-461 each coordinate L-aspartate. 502 to 505 (GLER) contacts ATP.

Belongs to the class-II aminoacyl-tRNA synthetase family. Type 2 subfamily. In terms of assembly, homodimer.

It is found in the cytoplasm. It catalyses the reaction tRNA(Asp) + L-aspartate + ATP = L-aspartyl-tRNA(Asp) + AMP + diphosphate. The sequence is that of Aspartate--tRNA ligase, cytoplasmic from Caenorhabditis elegans.